Consider the following 63-residue polypeptide: Phylloseptin-Az1 (63 aa).

An N-terminal signal peptide occupies residues 1–19 (LKKSLFLVVFLGLATLSIC). Positions 20–41 (EEEKRETEEEEYNQGEDDKSEE) are excised as a propeptide. F62 is modified (phenylalanine amide).

In terms of tissue distribution, expressed by the skin glands.

The protein resides in the secreted. Functionally, has antimicrobial activity. In Pithecopus azureus (Orange-legged monkey tree frog), this protein is Phylloseptin-Az1.